A 215-amino-acid polypeptide reads, in one-letter code: Casparian strip membrane protein 3 (215 aa).

Residues 1–26 (MDSEKTGEAKITIQEPKAADPKGKGI) are disordered. At 1 to 55 (MDSEKTGEAKITIQEPKAADPKGKGIADAPPPPVVVTTAKAIQKLPRGGWKKGVA) the chain is on the cytoplasmic side. The helical transmembrane segment at 56–76 (IFDFVVRLCAIATGLAATGIM) threads the bilayer. Over 77 to 101 (GTTEQTLPFFTQFFQFHAEYNDLPT) the chain is Extracellular. Residues 102-122 (FMFFVFANGIASGYLILSLPF) form a helical membrane-spanning segment. Residues 123-136 (SIVCIVRPLAIVPR) are Cytoplasmic-facing. The chain crosses the membrane as a helical span at residues 137-157 (LLLIIFDTVVMALTIAAASAA). The Extracellular segment spans residues 158 to 189 (AAIVYLAHNGNSNANWNAICQQFNDFCQQTST). The chain crosses the membrane as a helical span at residues 190 to 210 (AVVASFITAAMLTFLIVLSAF). Topologically, residues 211-215 (ALKRN) are cytoplasmic.

The protein belongs to the Casparian strip membrane proteins (CASP) family. In terms of assembly, homodimer and heterodimers.

The protein resides in the cell membrane. Functionally, regulates membrane-cell wall junctions and localized cell wall deposition. Required for establishment of the Casparian strip membrane domain (CSD) and the subsequent formation of Casparian strips, a cell wall modification of the root endodermis that determines an apoplastic barrier between the intraorganismal apoplasm and the extraorganismal apoplasm and prevents lateral diffusion. This Ricinus communis (Castor bean) protein is Casparian strip membrane protein 3.